Here is a 628-residue protein sequence, read N- to C-terminus: Phosphomethylpyrimidine synthase (628 aa).

The disordered stretch occupies residues 1-22; sequence MSKQEKTINLSESAQVDQQSVQ. The segment covering 7-22 has biased composition (polar residues); it reads TINLSESAQVDQQSVQ. Substrate contacts are provided by residues Asn-232, Met-261, Tyr-290, His-326, 346–348, 387–390, and Glu-426; these read SRG and DGLR. His-430 serves as a coordination point for Zn(2+). Tyr-453 contributes to the substrate binding site. His-494 provides a ligand contact to Zn(2+). The [4Fe-4S] cluster site is built by Cys-574, Cys-577, and Cys-582.

Belongs to the ThiC family. Homodimer. The cofactor is [4Fe-4S] cluster.

It catalyses the reaction 5-amino-1-(5-phospho-beta-D-ribosyl)imidazole + S-adenosyl-L-methionine = 4-amino-2-methyl-5-(phosphooxymethyl)pyrimidine + CO + 5'-deoxyadenosine + formate + L-methionine + 3 H(+). It participates in cofactor biosynthesis; thiamine diphosphate biosynthesis. In terms of biological role, catalyzes the synthesis of the hydroxymethylpyrimidine phosphate (HMP-P) moiety of thiamine from aminoimidazole ribotide (AIR) in a radical S-adenosyl-L-methionine (SAM)-dependent reaction. This chain is Phosphomethylpyrimidine synthase, found in Pseudomonas putida (strain W619).